The chain runs to 530 residues: Phosphoenolpyruvate carboxykinase (ATP) (530 aa).

The substrate site is built by R56, Y196, and K202. ATP contacts are provided by residues K202, H221, and 237–245 (GLSGTGKTT). Residues K202 and H221 each coordinate Mn(2+). D258 contributes to the Mn(2+) binding site. ATP contacts are provided by residues E286, R322, 438 to 439 (RI), and T444. Residue R322 participates in substrate binding.

Belongs to the phosphoenolpyruvate carboxykinase (ATP) family. In terms of assembly, monomer. Mn(2+) serves as cofactor.

The protein resides in the cytoplasm. It catalyses the reaction oxaloacetate + ATP = phosphoenolpyruvate + ADP + CO2. It participates in carbohydrate biosynthesis; gluconeogenesis. Its function is as follows. Involved in the gluconeogenesis. Catalyzes the conversion of oxaloacetate (OAA) to phosphoenolpyruvate (PEP) through direct phosphoryl transfer between the nucleoside triphosphate and OAA. This Photobacterium profundum (strain SS9) protein is Phosphoenolpyruvate carboxykinase (ATP).